Reading from the N-terminus, the 227-residue chain is Abasic site processing protein YoaM (227 aa).

Cysteine 2 serves as the catalytic Nucleophile. Position 2 is a thiazolidine linkage to a ring-opened DNA abasic site (cysteine 2). Glutamate 106 is an active-site residue.

The protein belongs to the SOS response-associated peptidase family.

With respect to regulation, formation and reversal of DNA-protein cross-link depends on DNA context. Catalyzes formation of the thiazolidine linkage in presence of abasic sites in single-stranded DNA. Mediates the reversal of the thiazolidine cross-link in presence of double stranded DNA. Sensor of abasic sites in single-stranded DNA (ssDNA) required to preserve genome integrity by promoting error-free repair of abasic sites. Recognizes and binds abasic sites in ssDNA at replication forks and chemically modifies the lesion by forming a covalent cross-link with DNA: forms a stable thiazolidine linkage between a ring-opened abasic site and the alpha-amino and sulfhydryl substituents of its N-terminal catalytic cysteine residue. The DNA-protein cross-link is then reversed: able to catalyze the reversal of the thiazolidine cross-link and cycle between a cross-link and a non-cross-linked state depending on DNA context: mediates self-reversal of the thiazolidine cross-link in double stranded DNA. May act as a protease: mediates autocatalytic processing of its N-terminal methionine in order to expose the catalytic cysteine. The sequence is that of Abasic site processing protein YoaM (yoaM) from Bacillus subtilis (strain 168).